The sequence spans 579 residues: Arginine--tRNA ligase (579 aa).

The short motif at 136-146 (ANPTGPLHIGH) is the 'HIGH' region element.

It belongs to the class-I aminoacyl-tRNA synthetase family. As to quaternary structure, monomer.

Its subcellular location is the cytoplasm. It catalyses the reaction tRNA(Arg) + L-arginine + ATP = L-arginyl-tRNA(Arg) + AMP + diphosphate. The protein is Arginine--tRNA ligase of Anaplasma marginale (strain St. Maries).